The sequence spans 62 residues: Protein YnfQ (62 aa).

The protein belongs to the YmcF/YnqF peptide family.

In Escherichia coli (strain K12), this protein is Protein YnfQ.